Consider the following 225-residue polypeptide: Probable methylthioribulose-1-phosphate dehydratase (225 aa).

C86 contacts substrate. Zn(2+)-binding residues include H104 and H106. E127 serves as the catalytic Proton donor/acceptor. H183 serves as a coordination point for Zn(2+).

Belongs to the aldolase class II family. MtnB subfamily. The cofactor is Zn(2+).

It is found in the cytoplasm. The enzyme catalyses 5-(methylsulfanyl)-D-ribulose 1-phosphate = 5-methylsulfanyl-2,3-dioxopentyl phosphate + H2O. The protein operates within amino-acid biosynthesis; L-methionine biosynthesis via salvage pathway; L-methionine from S-methyl-5-thio-alpha-D-ribose 1-phosphate: step 2/6. Functionally, catalyzes the dehydration of methylthioribulose-1-phosphate (MTRu-1-P) into 2,3-diketo-5-methylthiopentyl-1-phosphate (DK-MTP-1-P). The sequence is that of Probable methylthioribulose-1-phosphate dehydratase from Leishmania infantum.